A 263-amino-acid chain; its full sequence is Small ribosomal subunit protein uS2m (263 aa).

The transit peptide at 1-15 (MLSRKLSPEQLVARR) directs the protein to the mitochondrion.

The protein belongs to the universal ribosomal protein uS2 family. Component of the mitochondrial small ribosomal subunit (mt-SSU). Mature yeast 74S mitochondrial ribosomes consist of a small (37S) and a large (54S) subunit. The 37S small subunit contains a 15S ribosomal RNA (15S mt-rRNA) and at least 32 different proteins. The 54S large subunit contains a 21S rRNA (21S mt-rRNA) and at least 45 different proteins.

It localises to the mitochondrion. Its function is as follows. Component of the mitochondrial ribosome (mitoribosome), a dedicated translation machinery responsible for the synthesis of mitochondrial genome-encoded proteins, including at least some of the essential transmembrane subunits of the mitochondrial respiratory chain. The mitoribosomes are attached to the mitochondrial inner membrane and translation products are cotranslationally integrated into the membrane. The polypeptide is Small ribosomal subunit protein uS2m (Schizosaccharomyces pombe (strain 972 / ATCC 24843) (Fission yeast)).